We begin with the raw amino-acid sequence, 204 residues long: Sec-independent protein translocase protein TatB (204 aa).

A helical membrane pass occupies residues 1 to 21 (MFDIGFSELLLIFIVGLVVLG). The segment covering 154 to 166 (VVSSVDSIQNGQS) has biased composition (polar residues). A disordered region spans residues 154–204 (VVSSVDSIQNGQSDLELDAQAEVDRQLAAMMDKYAPPDDVAENPISTEKTS).

It belongs to the TatB family. In terms of assembly, the Tat system comprises two distinct complexes: a TatABC complex, containing multiple copies of TatA, TatB and TatC subunits, and a separate TatA complex, containing only TatA subunits. Substrates initially bind to the TatABC complex, which probably triggers association of the separate TatA complex to form the active translocon.

The protein localises to the cell inner membrane. Functionally, part of the twin-arginine translocation (Tat) system that transports large folded proteins containing a characteristic twin-arginine motif in their signal peptide across membranes. Together with TatC, TatB is part of a receptor directly interacting with Tat signal peptides. TatB may form an oligomeric binding site that transiently accommodates folded Tat precursor proteins before their translocation. In Mannheimia succiniciproducens (strain KCTC 0769BP / MBEL55E), this protein is Sec-independent protein translocase protein TatB.